A 383-amino-acid polypeptide reads, in one-letter code: Glutaminyl-peptide cyclotransferase-like protein (383 aa).

Residues 33–53 form a helical membrane-spanning segment; the sequence is VQFLPLLLLALAMGLAFYIVW. A disulfide bridge links C168 with C192. Residue D187 coordinates Zn(2+). E226 functions as the Proton acceptor in the catalytic mechanism. Residue E227 participates in Zn(2+) binding. The active-site Proton acceptor is the D270. Residue H352 participates in Zn(2+) binding.

Belongs to the glutaminyl-peptide cyclotransferase family. Detected in thalamus, hippocampus, brain cortex, cerebellum, kidney, lung and liver, and at low levels in heart and spleen.

The protein resides in the golgi apparatus membrane. The catalysed reaction is N-terminal L-glutaminyl-[peptide] = N-terminal 5-oxo-L-prolyl-[peptide] + NH4(+). Functionally, responsible for the biosynthesis of pyroglutamyl peptides. The chain is Glutaminyl-peptide cyclotransferase-like protein (Qpctl) from Mus musculus (Mouse).